The primary structure comprises 372 residues: Phospho-2-dehydro-3-deoxyheptonate aldolase, tyrosine-inhibited (372 aa).

This sequence belongs to the class-I DAHP synthase family.

It is found in the cytoplasm. Its subcellular location is the nucleus. The enzyme catalyses D-erythrose 4-phosphate + phosphoenolpyruvate + H2O = 7-phospho-2-dehydro-3-deoxy-D-arabino-heptonate + phosphate. The protein operates within metabolic intermediate biosynthesis; chorismate biosynthesis; chorismate from D-erythrose 4-phosphate and phosphoenolpyruvate: step 1/7. In terms of biological role, stereospecific condensation of phosphoenolpyruvate (PEP) and D-erythrose-4-phosphate (E4P) giving rise to 3-deoxy-D-arabino-heptulosonate-7-phosphate (DAHP). This chain is Phospho-2-dehydro-3-deoxyheptonate aldolase, tyrosine-inhibited (aro4), found in Schizosaccharomyces pombe (strain 972 / ATCC 24843) (Fission yeast).